Consider the following 199-residue polypeptide: NADH-quinone oxidoreductase subunit B 2 (199 aa).

[4Fe-4S] cluster contacts are provided by Cys78, Cys79, Cys143, and Cys173.

It belongs to the complex I 20 kDa subunit family. As to quaternary structure, NDH-1 is composed of 14 different subunits. Subunits NuoB, C, D, E, F, and G constitute the peripheral sector of the complex. [4Fe-4S] cluster serves as cofactor.

It is found in the cell inner membrane. The catalysed reaction is a quinone + NADH + 5 H(+)(in) = a quinol + NAD(+) + 4 H(+)(out). NDH-1 shuttles electrons from NADH, via FMN and iron-sulfur (Fe-S) centers, to quinones in the respiratory chain. The immediate electron acceptor for the enzyme in this species is believed to be ubiquinone. Couples the redox reaction to proton translocation (for every two electrons transferred, four hydrogen ions are translocated across the cytoplasmic membrane), and thus conserves the redox energy in a proton gradient. In Rhodopseudomonas palustris (strain BisB5), this protein is NADH-quinone oxidoreductase subunit B 2.